The chain runs to 272 residues: Rhomboid-type serine protease B (272 aa).

Helical transmembrane passes span 30–50 (LVLLVILAFWLLELQTIWSVV), 72–92 (PFIHVGFFHAFVNLLALTPLL), 103–123 (TAVALFIGPLSTFPAGIYILV), 133–153 (AVVGASVWIFLLLGSEAIKTF), 164–184 (TKIPTWTSPLFACALVSIFVP), and 186–206 (TSFLGHLSAIIIGYLLGLGYL). Residue Ser-138 is the Nucleophile of the active site. The active site involves His-191.

It belongs to the peptidase S54 family.

The protein resides in the membrane. It carries out the reaction Cleaves type-1 transmembrane domains using a catalytic dyad composed of serine and histidine that are contributed by different transmembrane domains.. Functionally, rhomboid protease that catalyzes intramembrane proteolysis. Required for transcription factor srbA activation by mediating its release from the membrane and thereby regulating its activity under hypoxic conditions. Essential for iron homeostasis and resistance to azoles such as voriconazole. Required for virulence in murine models of invasive pulmonary aspergillosis (IPA). The protein is Rhomboid-type serine protease B of Aspergillus fumigatus (strain ATCC MYA-4609 / CBS 101355 / FGSC A1100 / Af293) (Neosartorya fumigata).